Consider the following 250-residue polypeptide: tRNA (guanine-N(1)-)-methyltransferase (250 aa).

S-adenosyl-L-methionine-binding positions include G116 and 136-141; that span reads IGDYVL.

Belongs to the RNA methyltransferase TrmD family. Homodimer.

The protein localises to the cytoplasm. It catalyses the reaction guanosine(37) in tRNA + S-adenosyl-L-methionine = N(1)-methylguanosine(37) in tRNA + S-adenosyl-L-homocysteine + H(+). In terms of biological role, specifically methylates guanosine-37 in various tRNAs. This Pseudomonas putida (strain GB-1) protein is tRNA (guanine-N(1)-)-methyltransferase.